Here is a 317-residue protein sequence, read N- to C-terminus: Tumor necrosis factor ligand superfamily member 11 (317 aa).

Positions 1–16 (MRRASRDYTKYLRGSE) are enriched in basic and acidic residues. The segment at 1–43 (MRRASRDYTKYLRGSEEMGGGPGAPHEGPLHAPPPPAPHQPPA) is disordered. Topologically, residues 1–47 (MRRASRDYTKYLRGSEEMGGGPGAPHEGPLHAPPPPAPHQPPAASRS) are cytoplasmic. A compositionally biased stretch (pro residues) spans 31–41 (HAPPPPAPHQP). Residues 48–68 (MFVALLGLGLGQVVCSVALFF) form a helical; Signal-anchor for type II membrane protein membrane-spanning segment. At 69-317 (YFRAQMDPNR…FGAFKVRDID (249 aa)) the chain is on the extracellular side. The THD domain maps to 164 to 313 (PFAHLTINAT…DATYFGAFKV (150 aa)). Residues asparagine 171 and asparagine 198 are each glycosylated (N-linked (GlcNAc...) asparagine).

This sequence belongs to the tumor necrosis factor family. In terms of assembly, homotrimer. Interacts with TNFRSF11B. Interacts with TNFRSF11A. Interacts with FBN1 (via N-terminal domain) in a Ca(+2)-dependent manner. Interacts with TNFAIP6 (via both Link and CUB domains). Post-translationally, the soluble form of isoform 1 derives from the membrane form by proteolytic processing. The cleavage may be catalyzed by ADAM17. Highest in the peripheral lymph nodes, weak in spleen, peripheral blood Leukocytes, bone marrow, heart, placenta, skeletal muscle, stomach and thyroid.

The protein localises to the cell membrane. It is found in the cytoplasm. The protein resides in the secreted. Functionally, cytokine that binds to TNFRSF11B/OPG and to TNFRSF11A/RANK. Osteoclast differentiation and activation factor. Augments the ability of dendritic cells to stimulate naive T-cell proliferation. May be an important regulator of interactions between T-cells and dendritic cells and may play a role in the regulation of the T-cell-dependent immune response. May also play an important role in enhanced bone-resorption in humoral hypercalcemia of malignancy. Induces osteoclastogenesis by activating multiple signaling pathways in osteoclast precursor cells, chief among which is induction of long lasting oscillations in the intracellular concentration of Ca (2+) resulting in the activation of NFATC1, which translocates to the nucleus and induces osteoclast-specific gene transcription to allow differentiation of osteoclasts. During osteoclast differentiation, in a TMEM64 and ATP2A2-dependent manner induces activation of CREB1 and mitochondrial ROS generation necessary for proper osteoclast generation. The sequence is that of Tumor necrosis factor ligand superfamily member 11 (TNFSF11) from Homo sapiens (Human).